Consider the following 229-residue polypeptide: MAKKKAFTPLFYLASIVFLPWWISFSVNKCLESWVTNWWNTGQSEIFLNNIQEKSLLEKFIELEELLLLDEMIKEYSETHLEEFGIGIHKETIQLIKIQNENRIHTILHFSTNIICFIILSGYSILGNEKLVILNSWAQEFLYNLSDTVKAFSILLLTDLCIGFHSPHGWELMIGSIYKDFGFVHNDQIISGLVSTFPVILDTIFKYWIFRYLNRLSPSLVVIYHSMND.

3 consecutive transmembrane segments (helical) span residues F7–V27, I107–G127, and I189–I209.

This sequence belongs to the CemA family.

It localises to the plastid. It is found in the chloroplast inner membrane. It carries out the reaction K(+)(in) + H(+)(out) = K(+)(out) + H(+)(in). Contributes to K(+)/H(+) antiport activity by supporting proton efflux to control proton extrusion and homeostasis in chloroplasts in a light-dependent manner to modulate photosynthesis. Prevents excessive induction of non-photochemical quenching (NPQ) under continuous-light conditions. Indirectly promotes efficient inorganic carbon uptake into chloroplasts. This is Potassium/proton antiporter CemA from Atropa belladonna (Belladonna).